A 365-amino-acid polypeptide reads, in one-letter code: Mannitol dehydrogenase (365 aa).

Cys-50, His-72, Cys-103, Cys-106, Cys-109, Cys-117, and Cys-166 together coordinate Zn(2+).

The protein belongs to the zinc-containing alcohol dehydrogenase family. Zn(2+) is required as a cofactor.

Its subcellular location is the cytoplasm. The enzyme catalyses D-mannitol + NAD(+) = D-mannose + NADH + H(+). Its function is as follows. Oxidizes mannitol to mannose. Provides the initial step by which translocated mannitol is committed to central metabolism and, by regulating mannitol pool size, is important in regulating salt tolerance at the cellular level. This Apium graveolens (Celery) protein is Mannitol dehydrogenase (MTD).